The sequence spans 250 residues: Sulfate transporter CysZ (250 aa).

A run of 4 helical transmembrane segments spans residues 27–47, 64–84, 150–170, and 210–230; these read FVVL…YYLF, FLSW…LATF, FLLL…WFLF, and MLVA…PVAV.

The protein belongs to the CysZ family.

It is found in the cell inner membrane. High affinity, high specificity proton-dependent sulfate transporter, which mediates sulfate uptake. Provides the sulfur source for the cysteine synthesis pathway. The sequence is that of Sulfate transporter CysZ from Vibrio cholerae serotype O1 (strain ATCC 39541 / Classical Ogawa 395 / O395).